Here is a 362-residue protein sequence, read N- to C-terminus: tRNA-specific 2-thiouridylase MnmA 1 (362 aa).

Residues 12-19 (GMSGGVDS) and Met-38 each bind ATP. Cys-104 functions as the Nucleophile in the catalytic mechanism. Cys-104 and Cys-200 are disulfide-bonded. ATP is bound at residue Gly-128. The tract at residues 150–152 (KDQ) is interaction with tRNA. Cys-200 functions as the Cysteine persulfide intermediate in the catalytic mechanism. Residues 306 to 307 (RY) form an interaction with tRNA region.

It belongs to the MnmA/TRMU family.

Its subcellular location is the cytoplasm. It carries out the reaction S-sulfanyl-L-cysteinyl-[protein] + uridine(34) in tRNA + AH2 + ATP = 2-thiouridine(34) in tRNA + L-cysteinyl-[protein] + A + AMP + diphosphate + H(+). Functionally, catalyzes the 2-thiolation of uridine at the wobble position (U34) of tRNA, leading to the formation of s(2)U34. This chain is tRNA-specific 2-thiouridylase MnmA 1, found in Clostridium tetani (strain Massachusetts / E88).